A 226-amino-acid chain; its full sequence is Large ribosomal subunit protein uL1 (226 aa).

It belongs to the universal ribosomal protein uL1 family. Part of the 50S ribosomal subunit.

Functionally, binds directly to 23S rRNA. The L1 stalk is quite mobile in the ribosome, and is involved in E site tRNA release. Protein L1 is also a translational repressor protein, it controls the translation of the L11 operon by binding to its mRNA. In Treponema pallidum (strain Nichols), this protein is Large ribosomal subunit protein uL1.